A 471-amino-acid chain; its full sequence is MAASASASALQAERCLLVGVGAGPRRHRLPLRMPPPLHAPPALLLLPHRRRRRWPPAVRASPGEGGGGGGGGGGGGGLAGALEKRPVMSALTVVVMNMRVLEIGVVAWSLATAIIPAVAGFMPGLVLSRILVGIGEGVSPSAATDLIARSIPVQERSRAVAVVFGGLSFGSVLGLLFAPPIIQNLGWESVFYIFGLLGIIWCLGFQSLKEQQLRGNEDIQVIQDLGQSPSGSSDLISSSVSPKSSESSLGELMNSLKDVPWREFFKSKAVWAMIYAHFCGSWGHYTCLSWLPTFFSEELDLNLTEAAWVSVLPPLGSMIITSIAAPFADNLISNGVDTTKVRKICQTIAFLSPATFMMLSSVDLGVPPWEIVAFLTSGLALSSFALSGLYCTHQDISREYASILLGITNTVGAVPGIVGVALTGYLLDTTHSWSISLFAPSIFFYLTGTAVWLAFASSEPQEFSKSEPESS.

Residues 1–59 (MAASASASALQAERCLLVGVGAGPRRHRLPLRMPPPLHAPPALLLLPHRRRRRWPPAVR) constitute a chloroplast transit peptide. Positions 56 to 76 (PAVRASPGEGGGGGGGGGGGG) are disordered. 4 helical membrane-spanning segments follow: residues 62–82 (PGEG…AGAL), 103–123 (IGVV…GFMP), 162–182 (VVFG…PPII), and 185–205 (LGWE…CLGF). Gly residues predominate over residues 63–76 (GEGGGGGGGGGGGG). The segment at 226 to 247 (GQSPSGSSDLISSSVSPKSSES) is disordered. Residues 228–247 (SPSGSSDLISSSVSPKSSES) show a composition bias toward low complexity. Helical transmembrane passes span 270–290 (VWAM…CLSW), 307–327 (AWVS…AAPF), 348–368 (IAFL…GVPP), 371–391 (IVAF…GLYC), 403–423 (ILLG…VALT), and 435–455 (ISLF…WLAF).

It belongs to the major facilitator superfamily. Sodium/anion cotransporter (TC 2.A.1.14) family.

It is found in the plastid. Its subcellular location is the chloroplast membrane. Probable anion transporter. This Oryza sativa subsp. japonica (Rice) protein is Probable anion transporter 5, chloroplastic (PHT4;5).